Here is a 110-residue protein sequence, read N- to C-terminus: UPF0060 membrane protein Rpic_4131 (110 aa).

4 helical membrane passes run 8–28 (VLFA…WLVL), 33–53 (PFWL…LLTL), 65–85 (YGGV…GVAL), and 88–108 (WDVG…LQPQ).

The protein belongs to the UPF0060 family.

The protein resides in the cell inner membrane. The chain is UPF0060 membrane protein Rpic_4131 from Ralstonia pickettii (strain 12J).